Here is a 250-residue protein sequence, read N- to C-terminus: Transmembrane ascorbate-dependent reductase CYB561 (250 aa).

Methionine 1 bears the N-acetylmethionine mark. Residues 1 to 15 (MEHSSASVPAALPYY) are Cytoplasmic-facing. A helical transmembrane segment spans residues 16 to 36 (VAFSQLLGLTVVAVTGAWLGL). The region spanning 18-219 (FSQLLGLTVV…FGVVVLYILA (202 aa)) is the Cytochrome b561 domain. Residues 37-50 (YRGGIAWESSLQFN) are Vesicular-facing. Residues 51–71 (VHPLCMVIGMIFLQGDALLVY) form a helical membrane-spanning segment. Histidine 52, arginine 72, and lysine 79 together coordinate heme b. Topologically, residues 72 to 83 (RVFRREAKRTTK) are cytoplasmic. 2 residues coordinate L-ascorbate: lysine 79 and lysine 83. A helical membrane pass occupies residues 84 to 104 (ILHGLLHVFAFIIALVGLVAV). Heme b is bound by residues histidine 86, 115 to 118 (DLYS), and histidine 120. At 105 to 123 (FDYHKKKGYADLYSLHSWC) the chain is on the vesicular side. Residues 124 to 144 (GILVFVLYFVQWLVGFSFFLF) form a helical membrane-spanning segment. The Cytoplasmic segment spans residues 145 to 157 (PGASFSLRSRYRP). Arginine 152 is an L-ascorbate binding site. Residues 158-178 (QHIFFGATIFLFSVGTALLGL) traverse the membrane as a helical segment. Residues histidine 159 and glutamate 180 each coordinate heme b. Residues 179–197 (KEALLFKLGSKYSTFEPEG) are Vesicular-facing. Residues 198–218 (VLANVLGLLLVCFGVVVLYIL) form a helical membrane-spanning segment. The Cytoplasmic portion of the chain corresponds to 219–250 (AQADWKRPSQAEEQALSMDFKTLTEGDSPSPQ). Position 224 (lysine 224) interacts with heme b. 2 positions are modified to phosphoserine: serine 246 and serine 248.

The cofactor is heme b. As to expression, abundantly distributed in a number of neuroendocrine tissues.

Its subcellular location is the cytoplasmic vesicle. The protein localises to the secretory vesicle. It localises to the chromaffin granule membrane. The catalysed reaction is monodehydro-L-ascorbate radical(out) + L-ascorbate(in) = monodehydro-L-ascorbate radical(in) + L-ascorbate(out). In terms of biological role, transmembrane reductase that uses ascorbate as an electron donor in the cytoplasm and transfers electrons across membranes to reduce monodehydro-L-ascorbate radical in the lumen of secretory vesicles. It is therefore involved the regeneration and homeostasis within secretory vesicles of ascorbate which in turn provides reducing equivalents needed to support the activity of intravesicular enzymes. This is Transmembrane ascorbate-dependent reductase CYB561 from Mus musculus (Mouse).